The primary structure comprises 66 residues: Truncated interferon antagonist OPG039 (66 aa).

Residues 29-58 form an ANK repeat; the sequence is HGHSALYYAIADNNMRLVCTLLNAGALKNL.

Belongs to the orthopoxvirus OPG039 family.

The protein is Truncated interferon antagonist OPG039 (OPG040) of Homo sapiens (Human).